The chain runs to 287 residues: Intermediate filament family orphan 2 (287 aa).

The IF rod domain maps to 1–254 (MNLQTMVDTL…RLIKGSADRN (254 aa)). Positions 248–287 (KGSADRNSPSPSSVASSDSGSTDEIQDDLEREADVEPMVS) are disordered. A compositionally biased stretch (low complexity) spans 255 to 267 (SPSPSSVASSDSG). Over residues 271-287 (EIQDDLEREADVEPMVS) the composition is skewed to acidic residues.

The protein belongs to the intermediate filament family.

The chain is Intermediate filament family orphan 2 (Iffo2) from Rattus norvegicus (Rat).